A 266-amino-acid chain; its full sequence is Killer cell lectin-like receptor 3 (266 aa).

The Cytoplasmic portion of the chain corresponds to 1–48 (MSEPEVTYSTVRLHKSSGLQKLVRHEETQGPREVGNRKCSAPWQLIVK). The helical; Signal-anchor for type II membrane protein transmembrane segment at 49–69 (ALGILCFLLLVTVAVLAVKIF) threads the bilayer. At 70–266 (QYNQHKQEIN…CGKKLDKFPD (197 aa)) the chain is on the extracellular side. Residues asparagine 79, asparagine 87, asparagine 104, and asparagine 113 are each glycosylated (N-linked (GlcNAc...) asparagine). The involved in dimerization stretch occupies residues 147–151 (WFCYS). Residues cysteine 149 and cysteine 154 are joined by a disulfide bond. The C-type lectin domain occupies 150 to 258 (YSTKCYYFIM…CNIPYYCICG (109 aa)). Asparagine 160 carries N-linked (GlcNAc...) asparagine glycosylation. Implicated in MHC class I binding regions lie at residues 160–162 (NKT), 195–196 (IP), 207–208 (KK), 224–233 (MKIRKMNFKS), and 240–245 (SKARIE). 3 disulfide bridges follow: cysteine 167-cysteine 255, cysteine 171-cysteine 257, and cysteine 236-cysteine 249.

As to quaternary structure, homodimer; disulfide-linked.

It localises to the membrane. In terms of biological role, receptor on natural killer (NK) cells for class I MHC. In Mus musculus (Mouse), this protein is Killer cell lectin-like receptor 3 (Klra3).